The following is a 926-amino-acid chain: DNA topoisomerase 3-alpha (926 aa).

The 145-residue stretch at 10–154 (TVLNVAEKPS…NLFIRRAHFS (145 aa)) folds into the Toprim domain. Positions 16, 123, and 125 each coordinate Mg(2+). The Topo IA-type catalytic domain occupies 172–604 (NQLFAEAVDA…CLQQMKACFL (433 aa)). Positions 219-224 (SYGPCQ) are interaction with DNA. Tyr-342 (O-(5'-phospho-DNA)-tyrosine intermediate) is an active-site residue. The C4-type zinc finger occupies 642-670 (CNLCNESDMALRKNRDGNFMVGCMNYPQC). Disordered regions lie at residues 740-760 (SRSQARRTPGTAPSNNIQGSN) and 775-806 (HASTNCPSRVPASRNSRPTATNPRNDESTVSC). The segment covering 750 to 760 (TAPSNNIQGSN) has biased composition (polar residues). A CCHC-type 1 zinc finger spans residues 767–782 (CIHCQQRGHASTNCPS). Positions 806, 809, 831, and 836 each coordinate Zn(2+). The GRF-type zinc finger occupies 806-845 (CNTCGSQCVLRTANTEANRGRQFFSCPTQGCSFFAWEDSI). Residues 849 to 890 (SGNATTGSNSGGSGRRGSRGRGRGGRGGQSSGGRRGSGTSFV) form a disordered region. Residues 873-884 (GRGGQSSGGRRG) show a composition bias toward gly residues. Residues 901-917 (RCFSCGDPSHFANACPN) form a CCHC-type 2 zinc finger.

It belongs to the type IA topoisomerase family. In terms of assembly, component of the RMI complex, containing at least TOP3A and RMI1. The RMI complex interacts with RECQL4A. The cofactor is Mg(2+).

The enzyme catalyses ATP-independent breakage of single-stranded DNA, followed by passage and rejoining.. Functionally, releases the supercoiling and torsional tension of DNA introduced during the DNA replication and transcription by transiently cleaving and rejoining one strand of the DNA duplex. Introduces a single-strand break via transesterification at a target site in duplex DNA. The scissile phosphodiester is attacked by the catalytic tyrosine of the enzyme, resulting in the formation of a DNA-(5'-phosphotyrosyl)-enzyme intermediate and the expulsion of a 3'-OH DNA strand. The free DNA strand then undergoes passage around the unbroken strand thus removing DNA supercoils. Finally, in the religation step, the DNA 3'-OH attacks the covalent intermediate to expel the active-site tyrosine and restore the DNA phosphodiester backbone. Essential component of the RMI complex, a complex that plays an important role in the resolution step of homologous recombination, in a process called Holliday Junction dissolution, to limit DNA crossover formation in cells. Together with RMI1, is essential for the resolution of meiotic recombination intermediates, a step that prevents entanglement of the parental chromosomes. May have DNA decatenation activity. This Arabidopsis thaliana (Mouse-ear cress) protein is DNA topoisomerase 3-alpha (TOP3A).